The primary structure comprises 470 residues: 3-isopropylmalate dehydratase large subunit (470 aa).

Positions 348, 409, and 412 each coordinate [4Fe-4S] cluster.

It belongs to the aconitase/IPM isomerase family. LeuC type 1 subfamily. As to quaternary structure, heterodimer of LeuC and LeuD. Requires [4Fe-4S] cluster as cofactor.

The catalysed reaction is (2R,3S)-3-isopropylmalate = (2S)-2-isopropylmalate. Its pathway is amino-acid biosynthesis; L-leucine biosynthesis; L-leucine from 3-methyl-2-oxobutanoate: step 2/4. Functionally, catalyzes the isomerization between 2-isopropylmalate and 3-isopropylmalate, via the formation of 2-isopropylmaleate. The sequence is that of 3-isopropylmalate dehydratase large subunit from Thioalkalivibrio sulfidiphilus (strain HL-EbGR7).